Consider the following 201-residue polypeptide: Recombination protein RecR (201 aa).

The segment at 60–75 (CSCCGNVDTSDPCTIC) adopts a C4-type zinc-finger fold. Positions 83 to 178 (ATLIVVEDVS…RVTRLAHGVP (96 aa)) constitute a Toprim domain.

Belongs to the RecR family.

Its function is as follows. May play a role in DNA repair. It seems to be involved in an RecBC-independent recombinational process of DNA repair. It may act with RecF and RecO. This chain is Recombination protein RecR, found in Brucella melitensis biotype 1 (strain ATCC 23456 / CCUG 17765 / NCTC 10094 / 16M).